The primary structure comprises 137 residues: Histone H2B.4 (137 aa).

Positions 1–37 (MAPKAEKKPAEKKPTEEKAEKKPRAEKRVPGKEGGEK) are enriched in basic and acidic residues. Residues 1–45 (MAPKAEKKPAEKKPTEEKAEKKPRAEKRVPGKEGGEKKGKKKAKK) are disordered. N6-acetyllysine is present on residues K7 and K27. K133 participates in a covalent cross-link: Glycyl lysine isopeptide (Lys-Gly) (interchain with G-Cter in ubiquitin).

Belongs to the histone H2B family. As to quaternary structure, the nucleosome is a histone octamer containing two molecules each of H2A, H2B, H3 and H4 assembled in one H3-H4 heterotetramer and two H2A-H2B heterodimers. The octamer wraps approximately 147 bp of DNA. In terms of processing, can be acetylated to form H2BK6ac and H2BK33ac. Post-translationally, monoubiquitinated to form H2BK143ub1; may give a specific tag for epigenetic transcriptional activation.

The protein localises to the nucleus. It is found in the chromosome. Functionally, core component of nucleosome. Nucleosomes wrap and compact DNA into chromatin, limiting DNA accessibility to the cellular machineries which require DNA as a template. Histones thereby play a central role in transcription regulation, DNA repair, DNA replication and chromosomal stability. DNA accessibility is regulated via a complex set of post-translational modifications of histones, also called histone code, and nucleosome remodeling. This Zea mays (Maize) protein is Histone H2B.4.